A 259-amino-acid polypeptide reads, in one-letter code: tRNA pseudouridine synthase A (259 aa).

Aspartate 51 serves as the catalytic Nucleophile. Tyrosine 109 is a binding site for substrate.

Belongs to the tRNA pseudouridine synthase TruA family. Homodimer.

The enzyme catalyses uridine(38/39/40) in tRNA = pseudouridine(38/39/40) in tRNA. Functionally, formation of pseudouridine at positions 38, 39 and 40 in the anticodon stem and loop of transfer RNAs. In Nitrosococcus oceani (strain ATCC 19707 / BCRC 17464 / JCM 30415 / NCIMB 11848 / C-107), this protein is tRNA pseudouridine synthase A.